A 231-amino-acid chain; its full sequence is Biosynthetic peptidoglycan transglycosylase (231 aa).

The helical transmembrane segment at 7–27 (LLFWLIVVPVLLVLLLQLYFF) threads the bilayer.

This sequence belongs to the glycosyltransferase 51 family.

The protein localises to the cell inner membrane. It catalyses the reaction [GlcNAc-(1-&gt;4)-Mur2Ac(oyl-L-Ala-gamma-D-Glu-L-Lys-D-Ala-D-Ala)](n)-di-trans,octa-cis-undecaprenyl diphosphate + beta-D-GlcNAc-(1-&gt;4)-Mur2Ac(oyl-L-Ala-gamma-D-Glu-L-Lys-D-Ala-D-Ala)-di-trans,octa-cis-undecaprenyl diphosphate = [GlcNAc-(1-&gt;4)-Mur2Ac(oyl-L-Ala-gamma-D-Glu-L-Lys-D-Ala-D-Ala)](n+1)-di-trans,octa-cis-undecaprenyl diphosphate + di-trans,octa-cis-undecaprenyl diphosphate + H(+). It participates in cell wall biogenesis; peptidoglycan biosynthesis. In terms of biological role, peptidoglycan polymerase that catalyzes glycan chain elongation from lipid-linked precursors. The sequence is that of Biosynthetic peptidoglycan transglycosylase from Janthinobacterium sp. (strain Marseille) (Minibacterium massiliensis).